The chain runs to 149 residues: Deoxyuridine 5'-triphosphate nucleotidohydrolase (149 aa).

Residues 68–70, Asn-81, and 85–87 each bind substrate; these read RSG and LID.

The protein belongs to the dUTPase family. Mg(2+) serves as cofactor.

The enzyme catalyses dUTP + H2O = dUMP + diphosphate + H(+). It functions in the pathway pyrimidine metabolism; dUMP biosynthesis; dUMP from dCTP (dUTP route): step 2/2. Its function is as follows. This enzyme is involved in nucleotide metabolism: it produces dUMP, the immediate precursor of thymidine nucleotides and it decreases the intracellular concentration of dUTP so that uracil cannot be incorporated into DNA. This is Deoxyuridine 5'-triphosphate nucleotidohydrolase from Laribacter hongkongensis (strain HLHK9).